The primary structure comprises 226 residues: MRIAELTALLHLASPALPIGAFSYSQGLEAAIEAQFITDADTACAWIRSGLSNVLAHGELPFLAHQIERWRTHDAAALIEGNREFLASRESAELRRETEQMGWSLRQLCASLEWGDAARRATLASMAPIAQPTAFAFAAIAHDAATDAALAAYAFSWVENQAAAALKAVPLGQLAGQRIIVALREPIDAAVRQALSTSPDDINTFAPQLGILSARHESQYSRLFRS.

It belongs to the UreF family. UreD, UreF and UreG form a complex that acts as a GTP-hydrolysis-dependent molecular chaperone, activating the urease apoprotein by helping to assemble the nickel containing metallocenter of UreC. The UreE protein probably delivers the nickel.

It localises to the cytoplasm. In terms of biological role, required for maturation of urease via the functional incorporation of the urease nickel metallocenter. This Paraburkholderia phymatum (strain DSM 17167 / CIP 108236 / LMG 21445 / STM815) (Burkholderia phymatum) protein is Urease accessory protein UreF.